We begin with the raw amino-acid sequence, 105 residues long: Large ribosomal subunit protein bL21 (105 aa).

This sequence belongs to the bacterial ribosomal protein bL21 family. In terms of assembly, part of the 50S ribosomal subunit. Contacts protein L20.

Functionally, this protein binds to 23S rRNA in the presence of protein L20. In Rickettsia typhi (strain ATCC VR-144 / Wilmington), this protein is Large ribosomal subunit protein bL21.